A 622-amino-acid chain; its full sequence is Basal cell adhesion molecule (622 aa).

A signal peptide spans 1-25 (MEPPDARAGLLWLTFLLSGYSGAQA). 2 Ig-like V-type domains span residues 26-135 (ELHV…SSVR) and 140-250 (PEDT…HTFR). The Extracellular portion of the chain corresponds to 26–541 (ELHVSVPPRV…GSVAPQTAQA (516 aa)). 3 disulfides stabilise this stretch: Cys-47-Cys-118, Cys-165-Cys-230, and Cys-284-Cys-330. 3 consecutive Ig-like C2-type domains span residues 267–342 (PSTT…EEVQ), 356–435 (PLEL…QSFQ), and 442–532 (PELK…FHFG). 4 N-linked (GlcNAc...) asparagine glycosylation sites follow: Asn-314, Asn-323, Asn-370, and Asn-377. 2 disulfide bridges follow: Cys-378–Cys-418 and Cys-467–Cys-516. The helical transmembrane segment at 542–562 (GVAVMAVAVSVGLLLLVVAAF) threads the bilayer. Residues 563 to 622 (YCMRRKGRPGCCRRAEKGAPPAREPELSHSGSERPEHTGLLMGGPSGGGRGGSGGFGDEC) lie on the Cytoplasmic side of the membrane. A disordered region spans residues 574–622 (CRRAEKGAPPAREPELSHSGSERPEHTGLLMGGPSGGGRGGSGGFGDEC). The span at 575-599 (RRAEKGAPPAREPELSHSGSERPEH) shows a compositional bias: basic and acidic residues. A phosphoserine mark is found at Ser-590, Ser-592, Ser-594, and Ser-615. Gly residues predominate over residues 603–622 (LMGGPSGGGRGGSGGFGDEC).

In terms of assembly, homodimer. Interacts with ITGA4:ITGB1. Interacts with spectrins SPTA1 and SPTB1. Epinephrine-stimulated phosphorylation of Ser-615 by PKA enhances adhesion to laminin. Ser-615 can also be phosphorylated by AKT1.

It is found in the cell membrane. In terms of biological role, transmembrane glycoprotein that functions as both a receptor and an adhesion molecule playing a crucial role in cell adhesion, motility, migration and invasion. Extracellular domain enables binding to extracellular matrix proteins, such as laminin, integrin and other ligands while its intracellular domain interacts with cytoskeletal proteins like hemoglobin, facilitating cell signal transduction. Serves as a receptor for laminin alpha-5/LAMA5 to promote cell adhesion. Mechanistically, JAK2 induces BCAM phosphorylation and activates its adhesion to laminin by stimulating a Rap1/AKT signaling pathway in the absence of EPOR. The polypeptide is Basal cell adhesion molecule (Bcam) (Mus musculus (Mouse)).